The following is a 337-amino-acid chain: HTH-type transcriptional regulator DegA (337 aa).

The HTH lacI-type domain maps to 1–57 (MKTTIYDVAKAAGVSITTVSRVINNTGRISDKTRQKVMNVMNEMAYTPNVHAAALTG). Residues 5–24 (IYDVAKAAGVSITTVSRVIN) constitute a DNA-binding region (H-T-H motif). Residues 300–319 (AERHRTAGRSNRGKRKAKQK) form a disordered region.

Involved in the control of degradation of B.subtilis amidophosphoribosyltransferase (purF). Probably activates the gene for a degradative protease. This is HTH-type transcriptional regulator DegA (degA) from Bacillus subtilis (strain 168).